The chain runs to 707 residues: MDANLRRKLDELPAEPGCYLMKDRAGEVVYVGKASSLRSRVRSYFDAGRGDQRAFVALLDGLLGDLEVIVTRSEKEAVLLENELIKKHRPRFNVRLRDDKDFIVLKLDERHPYPRLEVRRAREKRQPGARYFGPYSSASSIRETLRMVNRHFQLRTCSDHVFDHRKRPCILYQIHRCPAPCVYEVPAEEYRQSVEDAVEFLEGREGELVERLRGRMAGAAEGLRFEEAARLRDQLQAVERSLEKQRVLMSDRGDRDVIGLYREGPDLVVQVLSMRAGKLQDAQAHPFREQEFPAEEILSSFLSLYYEHTDAPDEILVPLEPVQAEALADVLSERRGRRVRLLTPQRGAKADLLDVARRNAEQGFRAWHEHDERREQALASLAKALHLARPPRWMECYDISTFQGALAVGSGVSMKDGEPDKANYRRYKVKAVAGQDDFAMLHEVVTRRLRRALGEGQLPDLIVIDGGKGQLNAALAAAKDLGVPTRPSPGNPDAPFVELVGLAKSRLVDGPALGTARVVARRGRRAEARLADAAEAAEKGFVSELARSPERVFLPGRKDPVVLRQNSAELFLLARLRDEAHRFAITFHRKLRRERNFQSVLEEIPGIGEGRKRALLRHFGALRRVREATPEEIAQVEGFGPRQAAAVHAFFHRPDAPPAAADEPSGAPEGTPAGGPAEAIPDAAIAATEAEIDAALADEDASPEPAA.

The 81-residue stretch at alanine 14–valine 94 folds into the GIY-YIG domain. Residues glycine 206 to serine 241 enclose the UVR domain. Residues proline 654 to alanine 684 form a disordered region. Residues proline 658 to alanine 684 show a composition bias toward low complexity.

Belongs to the UvrC family. Interacts with UvrB in an incision complex.

The protein localises to the cytoplasm. The UvrABC repair system catalyzes the recognition and processing of DNA lesions. UvrC both incises the 5' and 3' sides of the lesion. The N-terminal half is responsible for the 3' incision and the C-terminal half is responsible for the 5' incision. The polypeptide is UvrABC system protein C (Anaeromyxobacter dehalogenans (strain 2CP-C)).